The chain runs to 218 residues: Sodium channel regulatory subunit beta-1 (218 aa).

The signal sequence occupies residues 1-18 (MGTLLAFVVGAALVSSAW). Residues 19–157 (GGCVEVDSET…DKANRDMASI (139 aa)) are Extracellular-facing. Cystine bridges form between Cys-21-Cys-43 and Cys-40-Cys-121. In terms of domain architecture, Ig-like C2-type spans 22–150 (VEVDSETEAV…KIHLEVVDKA (129 aa)). Residues Asn-93, Asn-110, Asn-114, and Asn-135 are each glycosylated (N-linked (GlcNAc...) asparagine). The chain crosses the membrane as a helical span at residues 158-179 (VSEIMMYVLIVVLTIWLVAEMV). Residues 180–218 (YCYKKIAAATEAAAQENASEYLAITSESKENCTGVQVAE) are Cytoplasmic-facing.

The protein belongs to the sodium channel auxiliary subunit SCN1B (TC 8.A.17) family. A voltage-gated sodium (Nav) channel consists of an ion-conducting pore-forming alpha subunit functional on its own that is regulated by one or more beta subunits. Interacts with SCN1A; regulatory subunit of SCN1A/Nav1.1. Interacts with SCN3A; regulatory subunit of SCN3A/Nav1.3. Interacts with SCN4A; regulatory subunit of SCN4A/Nav1.4. Interacts with SCN5A; regulatory subunit of SCN5A/Nav1.5. Interacts with SCN8A; regulatory subunit of SCN8A/Nav1.6. Interacts with SCN9A; regulatory subunit of SCN9A/Nav1.7. Interacts with SCN10A; regulatory subunit of SCN10A/Nav1.8. Interacts with NFASC. Interacts with TMEM65.

The protein resides in the cell membrane. The protein localises to the perikaryon. It is found in the cell projection. Its subcellular location is the axon. In terms of biological role, regulatory subunit of multiple voltage-gated sodium (Nav) channels directly mediating the depolarization of excitable membranes. Navs, also called VGSCs (voltage-gated sodium channels) or VDSCs (voltage-dependent sodium channels), operate by switching between closed and open conformations depending on the voltage difference across the membrane. In the open conformation they allow Na(+) ions to selectively pass through the pore, along their electrochemical gradient. The influx of Na+ ions provokes membrane depolarization, initiating the propagation of electrical signals throughout cells and tissues. The accessory beta subunits participate in localization and functional modulation of the Nav channels. Modulates the activity of SCN1A/Nav1.1, SCN2A/Nav1.2, SCN3A/Nav1.3, SCN4A/Nav1.4, SCN5A/Nav1.5, SCN8A/Nav1.6, SCN9A/Nav1.7 and SCN10A/Nav1.8. This Bos taurus (Bovine) protein is Sodium channel regulatory subunit beta-1.